The primary structure comprises 117 residues: Large ribosomal subunit protein bL19 (117 aa).

Belongs to the bacterial ribosomal protein bL19 family.

In terms of biological role, this protein is located at the 30S-50S ribosomal subunit interface and may play a role in the structure and function of the aminoacyl-tRNA binding site. This is Large ribosomal subunit protein bL19 from Halorhodospira halophila (strain DSM 244 / SL1) (Ectothiorhodospira halophila (strain DSM 244 / SL1)).